Consider the following 128-residue polypeptide: Aspartate 1-decarboxylase (128 aa).

The active-site Schiff-base intermediate with substrate; via pyruvic acid is the Ser25. Ser25 is modified (pyruvic acid (Ser)). Thr57 serves as a coordination point for substrate. Residue Tyr58 is the Proton donor of the active site. A substrate-binding site is contributed by 73–75 (GAA).

The protein belongs to the PanD family. Heterooctamer of four alpha and four beta subunits. It depends on pyruvate as a cofactor. Is synthesized initially as an inactive proenzyme, which is activated by self-cleavage at a specific serine bond to produce a beta-subunit with a hydroxyl group at its C-terminus and an alpha-subunit with a pyruvoyl group at its N-terminus.

The protein localises to the cytoplasm. The catalysed reaction is L-aspartate + H(+) = beta-alanine + CO2. Its pathway is cofactor biosynthesis; (R)-pantothenate biosynthesis; beta-alanine from L-aspartate: step 1/1. Its function is as follows. Catalyzes the pyruvoyl-dependent decarboxylation of aspartate to produce beta-alanine. This chain is Aspartate 1-decarboxylase, found in Caldicellulosiruptor bescii (strain ATCC BAA-1888 / DSM 6725 / KCTC 15123 / Z-1320) (Anaerocellum thermophilum).